The chain runs to 430 residues: Enolase (430 aa).

Residue Q164 coordinates (2R)-2-phosphoglycerate. E208 acts as the Proton donor in catalysis. Mg(2+) contacts are provided by D245, E288, and D315. Positions 340, 369, 370, and 391 each coordinate (2R)-2-phosphoglycerate. K340 functions as the Proton acceptor in the catalytic mechanism.

The protein belongs to the enolase family. Mg(2+) is required as a cofactor.

It is found in the cytoplasm. It localises to the secreted. Its subcellular location is the cell surface. The catalysed reaction is (2R)-2-phosphoglycerate = phosphoenolpyruvate + H2O. The protein operates within carbohydrate degradation; glycolysis; pyruvate from D-glyceraldehyde 3-phosphate: step 4/5. Its function is as follows. Catalyzes the reversible conversion of 2-phosphoglycerate (2-PG) into phosphoenolpyruvate (PEP). It is essential for the degradation of carbohydrates via glycolysis. In Thermococcus gammatolerans (strain DSM 15229 / JCM 11827 / EJ3), this protein is Enolase.